The primary structure comprises 105 residues: Putative RNA-binding protein RbpF (105 aa).

Residues 2–79 (SIYVGNLSYE…RDLKVNKAKP (78 aa)) enclose the RRM domain. Residues 75–84 (NKAKPKEDRG) are compositionally biased toward basic and acidic residues. The tract at residues 75-105 (NKAKPKEDRGSFGGGNRGGYGGGGGGGRSRY) is disordered. Positions 85 to 105 (SFGGGNRGGYGGGGGGGRSRY) are enriched in gly residues.

This is Putative RNA-binding protein RbpF (rbpF) from Nostoc sp. (strain PCC 7120 / SAG 25.82 / UTEX 2576).